A 169-amino-acid polypeptide reads, in one-letter code: Deoxyuridine 5'-triphosphate nucleotidohydrolase (169 aa).

A compositionally biased stretch (polar residues) spans methionine 1–glutamate 10. The tract at residues methionine 1–glutamate 25 is disordered. Substrate-binding positions include arginine 91–glycine 93, glycine 105–aspartate 108, glycine 116, arginine 159, and phenylalanine 164–glycine 165.

This sequence belongs to the dUTPase family. As to quaternary structure, homodimer. Mg(2+) is required as a cofactor. Vegetative and floral merismatic cells and provascular and vascular merismatic derivatives.

It catalyses the reaction dUTP + H2O = dUMP + diphosphate + H(+). The protein operates within pyrimidine metabolism; dUMP biosynthesis; dUMP from dCTP (dUTP route): step 2/2. In terms of biological role, this enzyme is involved in nucleotide metabolism: it produces dUMP, the immediate precursor of thymidine nucleotides and it decreases the intracellular concentration of dUTP so that uracil cannot be incorporated into DNA. It may have as well a metabolic role in merismatic cells. The sequence is that of Deoxyuridine 5'-triphosphate nucleotidohydrolase from Solanum lycopersicum (Tomato).